The following is a 989-amino-acid chain: E3 ubiquitin-protein ligase Arkadia (989 aa).

Residues K19, K33, K46, K58, K72, K86, K95, and K109 each participate in a glycyl lysine isopeptide (Lys-Gly) (interchain with G-Cter in SUMO2) cross-link. Residues 63–195 (FSHLCDDSQK…TEADPVPSLL (133 aa)) form a disordered region. A compositionally biased stretch (basic and acidic residues) spans 65–88 (HLCDDSQKQEKDMTGNQQEQEKSG). Residues 97-109 (QQAGPSYVQNCVK) are compositionally biased toward polar residues. The span at 110 to 120 (ENQEILGRRQQ) shows a compositional bias: basic and acidic residues. The segment covering 131–144 (SSLSECLSSPSSSL) has biased composition (low complexity). K172 participates in a covalent cross-link: Glycyl lysine isopeptide (Lys-Gly) (interchain with G-Cter in SUMO2). The span at 173-183 (SRSHSARSHKW) shows a compositional bias: basic residues. Residues K197 and K217 each participate in a glycyl lysine isopeptide (Lys-Gly) (interchain with G-Cter in SUMO2) cross-link. The interval 213 to 293 (KRLVKSSSSQ…PSNPAAPSGS (81 aa)) is disordered. Residues 240–402 (ALAQRKYALL…VPTTSARMDS (163 aa)) form an interaction with AXIN1 region. 2 stretches are compositionally biased toward low complexity: residues 248–270 (LLSS…SSST) and 278–291 (ASAS…AAPS). The SUMO interaction motif 1 (SIM) motif lies at 298–302 (VVVIE). The SUMO interaction motif 2 (SIM) signature appears at 323-329 (EVEIVTV). Positions 335–367 (SRSTLGHSRSHWSQGSSSHTGRPQESRNRSRIS) are disordered. Low complexity predominate over residues 345–355 (HWSQGSSSHTG). Positions 380–384 (VVDLT) match the SUMO interaction motif 3 (SIM) motif. 3 disordered regions span residues 388–475 (DEPT…MPRL), 506–559 (HGHH…YHDQ), and 641–675 (MPPP…PPPQ). A compositionally biased stretch (polar residues) spans 393–451 (VPTTSARMDSQTTSASINNSNPSTSEQASDTTSTVASSQPSTVSETEATLTSNSATGSS). Positions 506 to 520 (HGHHFQHHHHHHHTP) are enriched in basic residues. Positions 548–558 (ANSSSGSSYHD) are enriched in polar residues. Residues 902–904 (YPH) form a ubiquitin binding region. Residues K918 and K922 each participate in a glycyl lysine isopeptide (Lys-Gly) (interchain with G-Cter in SUMO2) cross-link. Zn(2+) is bound by residues C937 and C940. The segment at 937 to 978 (CTICLSILEEGEDVRRLPCMHLFHQVCVDQWLITNKKCPICR) adopts an RING-type; atypical zinc-finger fold. The interval 952-956 (RLPCM) is ubiquitin binding. H960 and C963 together coordinate Zn(2+).

This sequence belongs to the Arkadia family. As to quaternary structure, monomer. Interacts with SMAD6, SMAD7, AXIN1, AXIN2 and SKIL isoform SNON. Interacts with (phosphorylated) SMAD2 and SMAD3. Part of a complex containing RNF111, AXIN1 and SMAD7. Interacts (via SIM domains) with SUMO1 and SUMO2. Ubiquitously expressed.

It localises to the nucleus. The protein resides in the cytoplasm. The protein localises to the PML body. The catalysed reaction is S-ubiquitinyl-[E2 ubiquitin-conjugating enzyme]-L-cysteine + [acceptor protein]-L-lysine = [E2 ubiquitin-conjugating enzyme]-L-cysteine + N(6)-ubiquitinyl-[acceptor protein]-L-lysine.. It participates in protein modification; protein ubiquitination. Binds free ubiquitin non-covalently via its RING-type zinc finger. Ubiquitin-binding leads to enhance the E3 ubiquitin-protein ligase activity by stabilizing the ubiquitin-conjugating enzyme E2 (donor ubiquitin) in the 'closed' conformation and activating ubiquitin transfer. E3 ubiquitin-protein ligase required for mesoderm patterning during embryonic development. Acts as an enhancer of the transcriptional responses of the SMAD2/SMAD3 effectors, which are activated downstream of BMP. Acts by mediating ubiquitination and degradation of SMAD inhibitors such as SMAD7, inducing their proteasomal degradation and thereby enhancing the transcriptional activity of TGF-beta and BMP. In addition to enhance transcription of SMAD2/SMAD3 effectors, also regulates their turnover by mediating their ubiquitination and subsequent degradation, coupling their activation with degradation, thereby ensuring that only effectors 'in use' are degraded. Activates SMAD3/SMAD4-dependent transcription by triggering signal-induced degradation of SNON isoform of SKIL. Associates with UBE2D2 as an E2 enzyme. Specifically binds polysumoylated chains via SUMO interaction motifs (SIMs) and mediates ubiquitination of sumoylated substrates. Catalyzes 'Lys-63'-linked ubiquitination of sumoylated XPC in response to UV irradiation, promoting nucleotide excision repair. Mediates ubiquitination and degradation of sumoylated PML. The regulation of the BMP-SMAD signaling is however independent of sumoylation and is not dependent of SUMO interaction motifs (SIMs). This is E3 ubiquitin-protein ligase Arkadia from Mus musculus (Mouse).